The following is a 650-amino-acid chain: Pentatricopeptide repeat-containing protein At2g41080 (650 aa).

12 PPR repeats span residues 43 to 77, 78 to 112, 114 to 139, 140 to 174, 175 to 209, 210 to 240, 241 to 275, 276 to 310, 311 to 341, 342 to 372, 378 to 413, and 414 to 444; these read NTSL…GFSS, DKFI…NYMS, NILI…MPDR, KLTT…GFSP, DEYT…GLEL, DLVV…MPVR, NLVA…GCRP, NKIT…GASS, VVAV…REDE, DEVM…MAEQ, NEVA…GFKP, and GLKH…MPIK. A type E motif region spans residues 449-524; it reads IWKTLLSACN…EAGISWFEHK (76 aa). The tract at residues 525-555 is type E(+) motif; that stretch reads GEVHQFKMGDRSQSKSKEIYSYLKELTLEMK. The interval 556 to 650 is type DYW motif; it reads LKGYKPDTAS…NGKCSCGDYW (95 aa).

It belongs to the PPR family. PCMP-H subfamily.

This Arabidopsis thaliana (Mouse-ear cress) protein is Pentatricopeptide repeat-containing protein At2g41080 (PCMP-H29).